The primary structure comprises 431 residues: MELELLFQNVVNSSAFYNNQVAVAVSGGVDSIVLLHLMTNWAKKNKLSLPIALTVNHGLRPESQKEADFVVSYAKELGAKESFILNWEKQNIKGNIQLQARKARYKLLAEWCKNNNVKYLLVAHHKDDQAETFLLRLERGSGVDGLSSMDYKSFLNGIDIFRPLLNFSRSEIEKYAKLHRLKWIEDRSNHDLKYRRTLYRNLLKASDNQEILTERICLTALHMKRAAKALMHYTRLAFNDCVNVHDLGYIEIKLSEFYQLPEEIALRLLLYSIMAIASKHYKPRYSSLIAIFNRILQKDSNVNCTLSGCKIRKYGENILIIRESSRIQEITVNLPLNEPTQWDNRFSCTILGNQGCSVIIAPLKKTQKVPEFLKDYNCCPEVFYSLPTVQKDSKVLAYPDVNYNGKNTNDDKVQCIINSTIKQNLVSLISI.

26 to 31 contributes to the ATP binding site; it reads SGGVDS.

It belongs to the tRNA(Ile)-lysidine synthase family.

It localises to the cytoplasm. It catalyses the reaction cytidine(34) in tRNA(Ile2) + L-lysine + ATP = lysidine(34) in tRNA(Ile2) + AMP + diphosphate + H(+). Ligates lysine onto the cytidine present at position 34 of the AUA codon-specific tRNA(Ile) that contains the anticodon CAU, in an ATP-dependent manner. Cytidine is converted to lysidine, thus changing the amino acid specificity of the tRNA from methionine to isoleucine. The polypeptide is tRNA(Ile)-lysidine synthase (Wolbachia pipientis wMel).